A 156-amino-acid polypeptide reads, in one-letter code: Small ribosomal subunit protein uS7 (156 aa).

It belongs to the universal ribosomal protein uS7 family. As to quaternary structure, part of the 30S ribosomal subunit. Contacts proteins S9 and S11.

One of the primary rRNA binding proteins, it binds directly to 16S rRNA where it nucleates assembly of the head domain of the 30S subunit. Is located at the subunit interface close to the decoding center, probably blocks exit of the E-site tRNA. In Trichormus variabilis (strain ATCC 29413 / PCC 7937) (Anabaena variabilis), this protein is Small ribosomal subunit protein uS7.